Reading from the N-terminus, the 1160-residue chain is Carbamoyl phosphate synthase arginine-specific large chain, mitochondrial (1160 aa).

The segment at 81–478 (AEHEKVKKVV…SLQKALRQVD (398 aa)) is carboxyphosphate synthetic domain. ATP-binding residues include Arg208, Arg248, Gly254, Gly255, Lys285, Leu287, Glu292, Gly318, Ile319, His320, Gln361, and Glu375. The ATP-grasp 1 domain occupies 212-404 (AKALNEINIP…LAYTAAKIAL (193 aa)). 3 residues coordinate Mg(2+): Gln361, Glu375, and Asn377. Mn(2+)-binding residues include Gln361, Glu375, and Asn377. The oligomerization domain stretch occupies residues 479-623 (PSFLGFMAMP…YTSYNASSHD (145 aa)). The carbamoyl phosphate synthetic domain stretch occupies residues 624 to 1012 (IDFNEHGTMV…AYWAALQSTQ (389 aa)). Residues 748 to 946 (SQILDKIGVD…FIDVATRSII (199 aa)) enclose the ATP-grasp 2 domain. ATP contacts are provided by Arg784, Lys823, Ile825, Glu830, Gly855, Val856, His857, Ser858, Gln898, and Glu917. Mg(2+)-binding residues include Gln898, Glu917, and Asn919. The Mn(2+) site is built by Gln898, Glu917, and Asn919. The tract at residues 1013–1144 (NFKIPLPGQG…PSVLSEKKEM (132 aa)) is allosteric domain. One can recognise an MGS-like domain in the interval 1014–1160 (FKIPLPGQGI…WSEWIGSHDL (147 aa)).

Belongs to the CarB family. Heterodimer composed of 2 chains; the small (or glutamine) chain promotes the hydrolysis of glutamine to ammonia, which is used by the large (or ammonia) chain to synthesize carbamoyl phosphate. It depends on Mg(2+) as a cofactor. Mn(2+) is required as a cofactor.

It localises to the mitochondrion. The enzyme catalyses hydrogencarbonate + L-glutamine + 2 ATP + H2O = carbamoyl phosphate + L-glutamate + 2 ADP + phosphate + 2 H(+). It catalyses the reaction hydrogencarbonate + NH4(+) + 2 ATP = carbamoyl phosphate + 2 ADP + phosphate + 2 H(+). It participates in amino-acid biosynthesis; L-arginine biosynthesis; carbamoyl phosphate from bicarbonate: step 1/1. Functionally, large subunit of the arginine-specific carbamoyl phosphate synthase (CPSase). CPSase catalyzes the formation of carbamoyl phosphate from the ammonia moiety of glutamine, hydrogencarbonate, and phosphate donated by ATP, the first step of the arginine biosynthetic pathway. The large subunit (synthetase) binds the substrates ammonia (free or transferred from glutamine from the small subunit), hydrogencarbonate and ATP and carries out an ATP-coupled ligase reaction, activating hydrogencarbonate by forming carboxy phosphate which reacts with ammonia to form carbamoyl phosphate. This Schizosaccharomyces pombe (strain 972 / ATCC 24843) (Fission yeast) protein is Carbamoyl phosphate synthase arginine-specific large chain, mitochondrial (arg4).